The chain runs to 2367 residues: Toxin B (2367 aa).

Residues 2-91 form a four-helical bundle region; sequence SLVNRKQLEK…EILELKNSNL (90 aa). Positions 96 to 469 constitute a GT44 domain; that stretch reads KNLHFIWIGG…YPEANTTITL (374 aa). Residues 96–469 form a glucosyltransferase region region; that stretch reads KNLHFIWIGG…YPEANTTITL (374 aa). UDP-alpha-D-glucose-binding positions include 101-103, Asn-139, 269-273, and 286-288; these read IWI, SDILR, and DVD. Mg(2+) is bound by residues Asp-286, Asp-288, and Glu-516. A UDP-alpha-D-glucose-binding site is contributed by 519–521; that stretch reads SLW. The autoprocessing region stretch occupies residues 545-800; sequence GEDDNLDFSQ…KSKNLPELST (256 aa). Zn(2+) is bound by residues Glu-546 and Asp-547. Residues 568–775 form the Peptidase C80 domain; it reads SSSTKSSERG…EESIIKDISS (208 aa). 3 residues coordinate 1D-myo-inositol hexakisphosphate: Tyr-578, Lys-601, and Lys-648. Zn(2+) is bound at residue His-654. Catalysis depends on His-654, which acts as the For protease activity. The active-site Nucleophile; for protease activity is Cys-699. Residue His-758 participates in Zn(2+) binding. 3 residues coordinate 1D-myo-inositol hexakisphosphate: Lys-765, Lys-776, and Lys-793. The translocation region stretch occupies residues 801-1501; that stretch reads LLQEIRNNSN…VVLIIKVYMD (701 aa). Interaction with host frizzled receptors FZD1, FZD2 and FZD7 regions lie at residues 1434–1439, 1487–1512, and 1598–1600; these read LKTLMA, SELS…YYSN, and SLK. Cell wall-binding repeat units follow at residues 1833 to 1852, 1854 to 1873, 1876 to 1895, 1926 to 1945, 1946 to 1965, 1967 to 1986, 1987 to 2006, 2007 to 2026, 2057 to 2076, 2077 to 2097, 2099 to 2118, 2119 to 2138, 2139 to 2158, 2209 to 2231, 2233 to 2252, 2253 to 2272, 2273 to 2292, 2323 to 2342, and 2343 to 2362; these read VSGL…PIKN, ITGF…DNGG, SVGE…NGVL, FTGK…NYRA, AIEW…DTGR, FKGL…DGIM, QKGF…SGVM, KSGY…NGEM, YSGI…SFTA, VVGW…NTAE, SIGI…SGIM, QIGF…SGIV, ESGM…NGLV, ETGW…EAKK, YKGI…NGIM, RTGL…DGEM, QYGY…DGIM, YTGW…EYIA, and ATGS…DTAQ. Residues 1835 to 2367 are receptor-binding (CROPS) region; the sequence is GLVYINDSLY…PDTAQLVISE (533 aa).

The protein belongs to the clostridial glucosylating toxin (LCGT) family. As to quaternary structure, interacts with host FZD1. Interacts with host FZD2; interaction promotes toxin entry into host cell and occupies the binding site for Wnt-adducted palmitoleate in FZD2, leading to prevent Wnt-binding and downstream Wnt signaling. Interacts with host FZD7. Interacts with host CSPG4. Interacts with host NECTIN3/PVRL3. Zn(2+) serves as cofactor. The cofactor is Mn(2+). It depends on Mg(2+) as a cofactor. Post-translationally, undergoes autocatalytic cleavage to release the N-terminal part (Glucosyltransferase TcdB), which constitutes the active part of the toxin, in the host cytosol. 1D-myo-inositol hexakisphosphate-binding (InsP6) activates the peptidase C80 domain and promotes autoprocessing.

It localises to the secreted. Its subcellular location is the host endosome membrane. The protein resides in the host cytoplasm. It is found in the host cytosol. The protein localises to the host cell membrane. It carries out the reaction L-threonyl-[protein] + UDP-alpha-D-glucose = 3-O-(alpha-D-glucosyl)-L-threonyl-[protein] + UDP + H(+). With respect to regulation, protease activity is activated upon binding to 1D-myo-inositol hexakisphosphate (InsP6), which induces conformational reorganization. Its function is as follows. Precursor of a cytotoxin that targets and disrupts the colonic epithelium, inducing the host inflammatory and innate immune responses and resulting in diarrhea and pseudomembranous colitis. TcdB constitutes the main toxin that mediates the pathology of C.difficile infection, an opportunistic pathogen that colonizes the colon when the normal gut microbiome is disrupted. Compared to TcdA, TcdB is more virulent and more important for inducing the host inflammatory and innate immune responses. This form constitutes the precursor of the toxin: it enters into host cells and mediates autoprocessing to release the active toxin (Glucosyltransferase TcdB) into the host cytosol. Targets colonic epithelia by binding to the frizzled receptors FZD1, FZD2 and FZD7, and enters host cells via clathrin-mediated endocytosis. Frizzled receptors constitute the major host receptors in the colonic epithelium, but other receptors, such as CSPG4 or NECTIN3/PVRL3, have been identified. Binding to carbohydrates and sulfated glycosaminoglycans on host cell surface also contribute to entry into cells. Once entered into host cells, acidification in the endosome promotes the membrane insertion of the translocation region and formation of a pore, leading to translocation of the GT44 and peptidase C80 domains across the endosomal membrane. This activates the peptidase C80 domain and autocatalytic processing, releasing the N-terminal part (Glucosyltransferase TcdB), which constitutes the active part of the toxin, in the cytosol. Functionally, active form of the toxin, which is released into the host cytosol following autoprocessing and inactivates small GTPases. Acts by mediating monoglucosylation of small GTPases of the Rho family (Rac1, RhoA, RhoB, RhoC, RhoG and Cdc42) in host cells at the conserved threonine residue located in the switch I region ('Thr-37/35'), using UDP-alpha-D-glucose as the sugar donor. Monoglucosylation of host small GTPases completely prevents the recognition of the downstream effector, blocking the GTPases in their inactive form, leading to actin cytoskeleton disruption and cell death, resulting in the loss of colonic epithelial barrier function. The protein is Toxin B of Clostridioides difficile (Peptoclostridium difficile).